Here is a 1336-residue protein sequence, read N- to C-terminus: Glutamate receptor ionotropic, NMDA 2D (1336 aa).

The first 27 residues, 1–27 (MRGAGGPRGPRGPAKMLLLLALACASP), serve as a signal peptide directing secretion. The Extracellular segment spans residues 28 to 582 (FPEEAPGPGG…SPSAFLEPYS (555 aa)). N92 is a glycosylation site (N-linked (GlcNAc...) asparagine). A disulfide bridge links C104 with C348. 4 N-linked (GlcNAc...) asparagine glycosylation sites follow: N352, N366, N384, and N467. Cystine bridges form between C455-C483 and C462-C484. L-glutamate contacts are provided by S539, T541, and R546. N-linked (GlcNAc...) asparagine glycosylation occurs at N569. A helical transmembrane segment spans residues 583-604 (PAVWVMMFVMCLTVVAVTVFIF). The Cytoplasmic segment spans residues 605–629 (EYLSPVGYNRSLATGKRPGGSTFTI). Positions 630–641 (GKSIWLLWALVF) form an intramembrane region, discontinuously helical. A pore-forming region spans residues 631-650 (KSIWLLWALVFNNSVPVENP). Topologically, residues 642–653 (NNSVPVENPRGT) are cytoplasmic. The helical transmembrane segment at 654–674 (TSKIMVLVWAFFAVIFLASYT) threads the bilayer. The Extracellular portion of the chain corresponds to 675–843 (ANLAAFMIQE…EVMSSKLDID (169 aa)). Residues S717, T718, and D759 each contribute to the L-glutamate site. An intrachain disulfide couples C773 to C828. The chain crosses the membrane as a helical span at residues 844 to 867 (NMAGVFYMLLVAMGLSLLVFAWEH). Over 868-1336 (LVYWRLRHCL…AHFSSLESEV (469 aa)) the chain is Cytoplasmic. Disordered stretches follow at residues 900 to 934 (EAAP…PFVP), 981 to 1123 (RAAP…SLGG), and 1225 to 1336 (RCGC…ESEV). Residues 902–932 (APPPAKPPPPPQPLPSPAYPAPRPAPGPAPF) show a composition bias toward pro residues. Low complexity predominate over residues 981–991 (RAAPRGAAGRP). Residues 992–1006 (LSPPAAQPPQKPPPS) show a composition bias toward pro residues. Positions 1035–1044 (AAAATAVGPP) are enriched in low complexity. Over residues 1074–1089 (PGAGGAGGTGGAGGGA) the composition is skewed to gly residues. The span at 1091–1104 (AAPPPCRAAPPPCP) shows a compositional bias: pro residues. Basic residues predominate over residues 1225-1240 (RCGCPRSHPHRPRASH). R1316 is modified (omega-N-methylarginine). Phosphoserine is present on S1326. The short motif at 1334 to 1336 (SEV) is the PDZ-binding element.

This sequence belongs to the glutamate-gated ion channel (TC 1.A.10.1) family. NR2D/GRIN2D subfamily. Heterotetramer. Forms heterotetrameric channels composed of two GluN1/zeta subunits (GRIN1), and two identical GluN2/epsilon subunits (GRIN2A, GRIN2B, GRIN2C or GRIN2D) or GluN3 subunits (GRIN3A or GRIN3B) (in vitro). In vivo, the subunit composition may depend on the expression levels of the different subunits. Interacts with PDZ domains of PATJ and DLG4.

Its subcellular location is the cell membrane. It is found in the postsynaptic cell membrane. It catalyses the reaction Ca(2+)(in) = Ca(2+)(out). The enzyme catalyses Na(+)(in) = Na(+)(out). The catalysed reaction is K(+)(in) = K(+)(out). Functionally, component of N-methyl-D-aspartate (NMDA) receptors (NMDARs) that function as heterotetrameric, ligand-gated cation channels with high calcium permeability and voltage-dependent block by Mg(2+). Participates in synaptic plasticity for learning and memory formation. Channel activation requires binding of the neurotransmitter L-glutamate to the GluN2 subunit, glycine or D-serine binding to the GluN1 subunit, plus membrane depolarization to eliminate channel inhibition by Mg(2+). NMDARs mediate simultaneously the potasium efflux and the influx of calcium and sodium. Each GluN2 subunit confers differential attributes to channel properties, including activation, deactivation and desensitization kinetics, pH sensitivity, Ca2(+) permeability, and binding to allosteric modulators. In Homo sapiens (Human), this protein is Glutamate receptor ionotropic, NMDA 2D.